Reading from the N-terminus, the 887-residue chain is Autotaxin (887 aa).

The signal sequence occupies residues Met1–Gly27. Residues Phe28–Arg35 constitute a propeptide, removed by furin. Asn53 carries N-linked (GlcNAc...) asparagine glycosylation. SMB domains lie at Thr54 to Ala97 and Arg98 to His142. 10 disulfide bridges follow: Cys58–Cys75, Cys62–Cys93, Cys73–Cys86, Cys79–Cys85, Cys102–Cys119, Cys107–Cys137, Cys117–Cys130, Cys123–Cys129, Cys148–Cys194, and Cys156–Cys350. The Cell attachment site motif lies at Arg126–Asp128. The tract at residues Val144–Pro501 is phosphodiesterase. Zn(2+)-binding residues include Asp171 and Thr209. The Nucleophile role is filled by Thr209. Residues Thr209, Asn230, and Asp311 each contribute to the 1-(9Z-octadecenoyl)-sn-glycero-3-phosphate site. The 1-hexadecanoyl-sn-glycero-3-phosphate site is built by Thr209, Asn230, and Asp311. Thr209, Asn230, and Asp311 together coordinate 1-tetradecanoyl-sn-glycerol 3-phosphate. Asp311, His315, Asp358, and His359 together coordinate Zn(2+). Cystine bridges form between Cys366–Cys468, Cys413–Cys830, Cys566–Cys691, Cys568–Cys676, and Cys799–Cys809. N-linked (GlcNAc...) asparagine glycosylation is found at Asn398 and Asn410. His474 is a binding site for Zn(2+). Residue His474 coordinates 1-(9Z-octadecenoyl)-sn-glycero-3-phosphate. His474 serves as a coordination point for 1-hexadecanoyl-sn-glycero-3-phosphate. Position 474 (His474) interacts with 1-tetradecanoyl-sn-glycerol 3-phosphate. Asn524 carries an N-linked (GlcNAc...) asparagine glycan. A compositionally biased stretch (basic and acidic residues) spans His586–Lys607. A disordered region spans residues His586–Pro615. A glycan (N-linked (GlcNAc...) asparagine) is linked at Asn610. The interval Leu622–Ile887 is nuclease-like domain. Positions 764, 766, 768, 770, and 772 each coordinate Ca(2+). Asn831 is a glycosylation site (N-linked (GlcNAc...) asparagine). Residues Ile854–Thr875 are required for secretion.

Belongs to the nucleotide pyrophosphatase/phosphodiesterase family. Zn(2+) serves as cofactor. The cofactor is Ca(2+). N-glycosylation, but not furin-cleavage, plays a critical role on secretion and on lysoPLD activity. Post-translationally, the interdomain disulfide bond between Cys-413 and Cys-830 is essential for catalytic activity. As to expression, abundantly expressed in cerebrum and cerebellum. Localized in secretory epithelial cells in the brain and the eye including choroid plexus epithelial cells, ciliary epithelial cells, iris pigment epithelial cells, and retinal pigment cells.

It localises to the secreted. It carries out the reaction a 1-O-alkyl-sn-glycero-3-phosphoethanolamine + H2O = a 1-O-alkyl-sn-glycero-3-phosphate + ethanolamine + H(+). The enzyme catalyses a 1-acyl-sn-glycero-3-phosphoethanolamine + H2O = a 1-acyl-sn-glycero-3-phosphate + ethanolamine + H(+). It catalyses the reaction 1-(9Z-octadecenoyl)-sn-glycero-3-phosphoethanolamine + H2O = 1-(9Z-octadecenoyl)-sn-glycero-3-phosphate + ethanolamine + H(+). The catalysed reaction is a 1-O-alkyl-sn-glycero-3-phosphocholine + H2O = a 1-O-alkyl-sn-glycero-3-phosphate + choline + H(+). It carries out the reaction 1-O-(9Z-octadecenyl)-sn-glycero-3-phosphocholine + H2O = 1-O-(9Z-octadecenyl)-sn-glycero-3-phosphate + choline + H(+). The enzyme catalyses 1-O-hexadecyl-sn-glycero-3-phosphocholine + H2O = 1-O-hexadecyl-sn-glycero-3-phosphate + choline + H(+). It catalyses the reaction a 1-O-(1Z-alkenyl)-sn-glycero-3-phosphocholine + H2O = a 1-O-(1Z-alkenyl)-sn-glycero-3-phosphate + choline + H(+). The catalysed reaction is a 1-acyl-sn-glycero-3-phosphocholine + H2O = a 1-acyl-sn-glycero-3-phosphate + choline + H(+). It carries out the reaction 1-dodecanoyl-sn-glycero-3-phosphocholine + H2O = 1-dodecanoyl-sn-glycerol 3-phosphate + choline + H(+). The enzyme catalyses 1-(9Z-octadecenoyl)-sn-glycero-3-phosphocholine + H2O = 1-(9Z-octadecenoyl)-sn-glycero-3-phosphate + choline + H(+). It catalyses the reaction 1-tetradecanoyl-sn-glycero-3-phosphocholine + H2O = 1-tetradecanoyl-sn-glycerol 3-phosphate + choline + H(+). The catalysed reaction is 1-decanoyl-sn-glycero-3-phosphocholine + H2O = 1-decanoyl-sn-glycero-3-phosphate + choline + H(+). It carries out the reaction 1-octadecanoyl-sn-glycero-3-phosphocholine + H2O = 1-octadecanoyl-sn-glycero-3-phosphate + choline + H(+). The enzyme catalyses 1-hexadecanoyl-sn-glycero-3-phosphocholine + H2O = 1-hexadecanoyl-sn-glycero-3-phosphate + choline + H(+). It catalyses the reaction 1-hexanoyl-sn-glycero-3-phosphocholine + H2O = 1-hexanoyl-sn-glycero-3-phosphate + choline + H(+). The catalysed reaction is 1-(9Z,12Z)-octadecadienoyl-sn-glycero-3-phosphocholine + H2O = 1-(9Z,12Z)-octadecadienoyl-sn-glycero-3-phosphate + choline + H(+). It carries out the reaction sphing-4-enine-phosphocholine + H2O = sphing-4-enine 1-phosphate + choline + H(+). The enzyme catalyses 1-(5Z,8Z,11Z,14Z-eicosatetraenoyl)-sn-glycero-3-phosphocholine + H2O = 1-(5Z,8Z,11Z,14Z-eicosatetraenoyl)-sn-glycero-3-phosphate + choline + H(+). It catalyses the reaction a 2-acyl-sn-glycero-3-phosphocholine + H2O = a 2-acyl-sn-glycerol 3-phosphate + choline + H(+). The catalysed reaction is a 1,2-diacyl-sn-glycero-3-phosphocholine + H2O = a 1,2-diacyl-sn-glycero-3-phosphate + choline + H(+). It carries out the reaction 1,2-dioctanoyl-sn-glycero-3-phosphocholine + H2O = 1,2-dioctanoyl-sn-glycero-3-phosphate + choline + H(+). The enzyme catalyses 1,2-didecanoyl-sn-glycero-3-phosphocholine + H2O = 1,2-didecanoyl-sn-glycero-3-phosphate + choline + H(+). It catalyses the reaction a 1-acyl-sn-glycero-3-phospho-L-serine + H2O = a 1-acyl-sn-glycero-3-phosphate + L-serine + H(+). The catalysed reaction is 1-(9Z-octadecenoyl)-sn-glycero-3-phospho-L-serine + H2O = 1-(9Z-octadecenoyl)-sn-glycero-3-phosphate + L-serine + H(+). It carries out the reaction a 2-acyl-sn-glycero-3-phospho-L-serine + H2O = a 2-acyl-sn-glycerol 3-phosphate + L-serine + H(+). Inhibited by vanadate. Inhibited by micromolar levels of bile salts, such as tauroursodeoxycholate. Not inhibited by taurodeoxycholate. Not inhibited by hydroxysterols, such as 7-hydroxycholesterol, testosterone, dexamethasone and prednisolone. Inhibited by EDTA and EGTA. Its function is as follows. Secreted lysophospholipase D that hydrolyzes lysophospholipids to produce the signaling molecule lysophosphatidic acid (LPA) in extracellular fluids. Its major substrate is lysophosphatidylcholine. Can also act on sphingosylphosphorylcholine producing sphingosine-1-phosphate, a modulator of cell motility. Can hydrolyze, in vitro, bis-pNPP, to some extent pNP-TMP, and barely ATP. Involved in several motility-related processes such as angiogenesis and neurite outgrowth. Acts as an angiogenic factor by stimulating migration of smooth muscle cells and microtubule formation. Stimulates migration of melanoma cells, probably via a pertussis toxin-sensitive G protein. May have a role in induction of parturition. Possible involvement in cell proliferation and adipose tissue development. Required for LPA production in activated platelets, cleaves the sn-1 lysophospholipids to generate sn-1 lysophosphatidic acids containing predominantly 18:2 and 20:4 fatty acids. Shows a preference for the sn-1 to the sn-2 isomer of 1-O-alkyl-sn-glycero-3-phosphocholine (lyso-PAF). This Rattus norvegicus (Rat) protein is Autotaxin.